Here is a 152-residue protein sequence, read N- to C-terminus: Glycine cleavage system H protein, mitochondrial (152 aa).

Residues M1 to F31 constitute a mitochondrion transit peptide. Positions V53–K135 constitute a Lipoyl-binding domain. K94 is modified (N6-lipoyllysine).

The protein belongs to the GcvH family. In terms of assembly, the glycine cleavage system is composed of four proteins: P, T, L and H. (R)-lipoate serves as cofactor.

It localises to the mitochondrion. Functionally, the glycine cleavage system catalyzes the degradation of glycine. The H protein shuttles the methylamine group of glycine from the P protein to the T protein. This chain is Glycine cleavage system H protein, mitochondrial (GDCSH), found in Flaveria pubescens (Yellowtops).